The chain runs to 252 residues: Adenosine 5'-phosphosulfate reductase (252 aa).

[4Fe-4S] cluster contacts are provided by C125, C126, C208, and C211. The tract at residues D219–S252 is disordered. Basic and acidic residues predominate over residues Y221–C235. Residue C235 is the Nucleophile; cysteine thiosulfonate intermediate of the active site.

Belongs to the PAPS reductase family. CysH subfamily. Requires [4Fe-4S] cluster as cofactor.

The protein resides in the cytoplasm. The enzyme catalyses [thioredoxin]-disulfide + sulfite + AMP + 2 H(+) = adenosine 5'-phosphosulfate + [thioredoxin]-dithiol. The protein operates within sulfur metabolism; hydrogen sulfide biosynthesis; sulfite from sulfate. Functionally, catalyzes the formation of sulfite from adenosine 5'-phosphosulfate (APS) using thioredoxin as an electron donor. The polypeptide is Adenosine 5'-phosphosulfate reductase (Salinibacter ruber (strain DSM 13855 / M31)).